The sequence spans 411 residues: S-adenosylmethionine synthase (411 aa).

His15 is a binding site for ATP. Asp17 serves as a coordination point for Mg(2+). Glu43 is a K(+) binding site. L-methionine is bound by residues Glu56 and Gln99. A flexible loop region spans residues 99 to 109; sequence QSQEIAQGVDT. ATP is bound by residues 179–181, Asp260, 266–267, Ala283, and Lys287; these read DGK and RK. Residue Asp260 participates in L-methionine binding. L-methionine is bound at residue Lys291.

It belongs to the AdoMet synthase family. In terms of assembly, homotetramer; dimer of dimers. Mg(2+) serves as cofactor. The cofactor is K(+).

It is found in the cytoplasm. The enzyme catalyses L-methionine + ATP + H2O = S-adenosyl-L-methionine + phosphate + diphosphate. It functions in the pathway amino-acid biosynthesis; S-adenosyl-L-methionine biosynthesis; S-adenosyl-L-methionine from L-methionine: step 1/1. Catalyzes the formation of S-adenosylmethionine (AdoMet) from methionine and ATP. The overall synthetic reaction is composed of two sequential steps, AdoMet formation and the subsequent tripolyphosphate hydrolysis which occurs prior to release of AdoMet from the enzyme. The sequence is that of S-adenosylmethionine synthase from Corynebacterium jeikeium (strain K411).